Here is a 350-residue protein sequence, read N- to C-terminus: Transcriptional activator hacA (350 aa).

Residues 1–118 (MKSADRFSPV…RLEMEKLESE (118 aa)) form a disordered region. The segment covering 35–47 (PADTSLQTKNVVA) has biased composition (polar residues). Composition is skewed to basic and acidic residues over residues 81–95 (KTEDEKEQRRIERVL) and 104–118 (SRERKRLEMEKLESE). Residues 87–150 (EQRRIERVLR…NRLSQQVAQL (64 aa)) enclose the bZIP domain. The tract at residues 89–142 (RRIERVLRNRAAAQTSRERKRLEMEKLESEKIDMEQQNQFLLQRLAQMEAENNR) is basic motif. The leucine-zipper stretch occupies residues 143 to 150 (LSQQVAQL). Disordered regions lie at residues 152–175 (AEVRGSRHSTPTSSSPASVSPTLT), 194–218 (PTPSVTDYSPTLKPSSLAESPDLTQ), and 328–350 (SLQPSHGASTSRCDGQGIAAGSA). The segment covering 160–175 (STPTSSSPASVSPTLT) has biased composition (low complexity). 2 stretches are compositionally biased toward polar residues: residues 196-211 (PSVTDYSPTLKPSSLA) and 329-340 (LQPSHGASTSRC).

This sequence belongs to the bZIP family. Homodimer.

It localises to the nucleus. Transcriptional activator involved in the unfolded protein response (UPR) pathway. Recognizes and binds to the UPR element (UPRE) in the promoter of UPR-regulated genes. Increases the synthesis of endoplasmic reticulum-resident proteins required for protein folding as well as components of the secretory pathway. In Emericella nidulans (strain FGSC A4 / ATCC 38163 / CBS 112.46 / NRRL 194 / M139) (Aspergillus nidulans), this protein is Transcriptional activator hacA (hacA).